Here is a 351-residue protein sequence, read N- to C-terminus: Fe-S cluster assembly protein DRE2 (351 aa).

An N-terminal SAM-like domain region spans residues 1–151; sequence MATTGRVLLL…KPDIGAQQAI (151 aa). 2 disordered regions span residues 93–118 and 157–186; these read RNRE…RYND and RRRK…PSSN. 2 stretches are compositionally biased toward polar residues: residues 105 to 114 and 167 to 186; these read GNGSNANSSR and TLAS…PSSN. The segment at 152–243 is linker; it reads PLKLSRRRKE…EDELLDEDDM (92 aa). [2Fe-2S] cluster contacts are provided by Cys-253, Cys-264, Cys-267, and Cys-269. Positions 253–269 are fe-S binding site A; it reads CRPKPGKRRRACKDCSC. Positions 314, 317, 325, and 328 each coordinate [4Fe-4S] cluster. 2 short sequence motifs (cx2C motif) span residues 314–317 and 325–328; these read CGNC and CDGC. The interval 314–328 is fe-S binding site B; that stretch reads CGNCSLGDAFRCDGC.

Belongs to the anamorsin family. In terms of assembly, monomer. Interacts with TAH18. Interacts with MIA40. The cofactor is [2Fe-2S] cluster. [4Fe-4S] cluster is required as a cofactor.

It localises to the cytoplasm. Its subcellular location is the mitochondrion intermembrane space. Component of the cytosolic iron-sulfur (Fe-S) protein assembly (CIA) machinery required for the maturation of extramitochondrial Fe-S proteins. Part of an electron transfer chain functioning in an early step of cytosolic Fe-S biogenesis, facilitating the de novo assembly of a [4Fe-4S] cluster on the scaffold complex CFD1-NBP35. Electrons are transferred to DRE2 from NADPH via the FAD- and FMN-containing protein TAH18. TAH18-DRE2 are also required for the assembly of the diferric tyrosyl radical cofactor of ribonucleotide reductase (RNR), probably by providing electrons for reduction during radical cofactor maturation in the catalytic small subunit RNR2. The sequence is that of Fe-S cluster assembly protein DRE2 from Ajellomyces capsulatus (strain NAm1 / WU24) (Darling's disease fungus).